Reading from the N-terminus, the 280-residue chain is Probable holocytochrome-c-type synthase (280 aa).

The interval 1–95 is disordered; sequence MGSSQSTPKV…FALPTKREKS (95 aa). 2 HRM repeats span residues 35-40 and 56-61; these read QCPLTP and ACPVGA.

It belongs to the cytochrome c-type heme lyase family.

Its subcellular location is the mitochondrion inner membrane. It carries out the reaction holo-[cytochrome c] = apo-[cytochrome c] + heme b. Functionally, probable lyase that catalyzes the covalent linking of the heme group to the cytochrome C apoprotein to produce the mature functional cytochrome. In Caenorhabditis elegans, this protein is Probable holocytochrome-c-type synthase (cchl-1).